Reading from the N-terminus, the 883-residue chain is Valine--tRNA ligase (883 aa).

A 'HIGH' region motif is present at residues 46 to 56 (PNVTGKLHLGH). Residues 520-524 (KMSKS) carry the 'KMSKS' region motif. ATP is bound at residue lysine 523. Residues 809 to 883 (LADLLNVEEE…RIKEMEKLIK (75 aa)) are a coiled coil.

The protein belongs to the class-I aminoacyl-tRNA synthetase family. ValS type 1 subfamily. Monomer.

The protein resides in the cytoplasm. It carries out the reaction tRNA(Val) + L-valine + ATP = L-valyl-tRNA(Val) + AMP + diphosphate. Catalyzes the attachment of valine to tRNA(Val). As ValRS can inadvertently accommodate and process structurally similar amino acids such as threonine, to avoid such errors, it has a 'posttransfer' editing activity that hydrolyzes mischarged Thr-tRNA(Val) in a tRNA-dependent manner. The sequence is that of Valine--tRNA ligase from Streptococcus mutans serotype c (strain ATCC 700610 / UA159).